A 237-amino-acid polypeptide reads, in one-letter code: Uracil-DNA glycosylase (237 aa).

Catalysis depends on aspartate 77, which acts as the Proton acceptor.

The protein belongs to the uracil-DNA glycosylase (UDG) superfamily. UNG family.

It is found in the cytoplasm. It carries out the reaction Hydrolyzes single-stranded DNA or mismatched double-stranded DNA and polynucleotides, releasing free uracil.. Excises uracil residues from the DNA which can arise as a result of misincorporation of dUMP residues by DNA polymerase or due to deamination of cytosine. The polypeptide is Uracil-DNA glycosylase (Acinetobacter baumannii (strain AB307-0294)).